The sequence spans 178 residues: Thymidine kinase (178 aa).

Glycine 13–serine 20 serves as a coordination point for ATP. The active-site Proton acceptor is glutamate 85. Residue phenylalanine 115 participates in substrate binding. Zn(2+) contacts are provided by cysteine 140 and cysteine 143. Isoleucine 159–glycine 163 provides a ligand contact to substrate. 2 residues coordinate Zn(2+): cysteine 172 and cysteine 175.

This sequence belongs to the thymidine kinase family.

It carries out the reaction thymidine + ATP = dTMP + ADP + H(+). This is Thymidine kinase (TK) from Oryctolagus cuniculus (Rabbit).